A 723-amino-acid chain; its full sequence is Methionine--tRNA ligase (723 aa).

A 'HIGH' region motif is present at residues 11–21 (PYANGPIHAGH). Zn(2+)-binding residues include C143, C146, C156, and C159. The short motif at 344 to 348 (KFSTS) is the 'KMSKS' region element. T347 serves as a coordination point for ATP. The tRNA-binding domain maps to 623–723 (DFAKLDLRVG…KEVKLGAKVR (101 aa)).

The protein belongs to the class-I aminoacyl-tRNA synthetase family. MetG type 1 subfamily. In terms of assembly, homodimer. Zn(2+) serves as cofactor.

The protein localises to the cytoplasm. The catalysed reaction is tRNA(Met) + L-methionine + ATP = L-methionyl-tRNA(Met) + AMP + diphosphate. Is required not only for elongation of protein synthesis but also for the initiation of all mRNA translation through initiator tRNA(fMet) aminoacylation. The polypeptide is Methionine--tRNA ligase (Pyrococcus horikoshii (strain ATCC 700860 / DSM 12428 / JCM 9974 / NBRC 100139 / OT-3)).